The primary structure comprises 484 residues: Malonate-semialdehyde dehydrogenase 3 (484 aa).

Residues phenylalanine 152, lysine 176, glutamate 179, arginine 180, and serine 229 each coordinate NAD(+). Cysteine 284 (nucleophile) is an active-site residue. Glutamate 384 lines the NAD(+) pocket.

It belongs to the aldehyde dehydrogenase family. IolA subfamily. Homotetramer.

It catalyses the reaction 3-oxopropanoate + NAD(+) + CoA + H2O = hydrogencarbonate + acetyl-CoA + NADH + H(+). It carries out the reaction 2-methyl-3-oxopropanoate + NAD(+) + CoA + H2O = propanoyl-CoA + hydrogencarbonate + NADH + H(+). It participates in polyol metabolism; myo-inositol degradation into acetyl-CoA; acetyl-CoA from myo-inositol: step 7/7. Catalyzes the oxidation of malonate semialdehyde (MSA) and methylmalonate semialdehyde (MMSA) into acetyl-CoA and propanoyl-CoA, respectively. Is involved in a myo-inositol catabolic pathway. Bicarbonate, and not CO2, is the end-product of the enzymatic reaction. In Geobacillus kaustophilus (strain HTA426), this protein is Malonate-semialdehyde dehydrogenase 3.